The following is a 668-amino-acid chain: RNA-binding protein PIN4 (668 aa).

Residues 1–77 form a disordered region; it reads METSSFENAP…NLNNAPTNGA (77 aa). Over residues 8-23 the composition is skewed to low complexity; the sequence is NAPPAAINDAQDNNIN. The span at 24–36 shows a compositional bias: polar residues; it reads TETNDQETNQQSI. The segment covering 37–46 has biased composition (basic and acidic residues); that stretch reads ETRDAIDKEN. Polar residues predominate over residues 47 to 74; the sequence is GVQTETGENSAKNAEQNVSSTNLNNAPT. A Phosphoserine modification is found at serine 56. The region spanning 85–163 is the RRM domain; that stretch reads NAIVIKNIPF…RKLKVEYKKM (79 aa). Positions 168–188 are enriched in basic and acidic residues; the sequence is ERERIEREKREKRGQLEEQHR. The disordered stretch occupies residues 168–214; the sequence is ERERIEREKREKRGQLEEQHRSSSNLSLDSLSKMSGSGNNNTSNNQL. Phosphoserine is present on residues serine 189, serine 191, serine 194, and serine 197. A compositionally biased stretch (low complexity) spans 189-212; the sequence is SSSNLSLDSLSKMSGSGNNNTSNN. Position 305 is a phosphothreonine (threonine 305). Disordered regions lie at residues 374–398 and 420–570; these read QQQGQMTSAHPLQPNSTGGSMNRSQ and VNNS…QRVP. Position 393 is a phosphoserine (serine 393). Over residues 420 to 449 the composition is skewed to low complexity; it reads VNNSSNSNTINSNNGNGNNVIINNNSASST. Residues 450-478 are compositionally biased toward polar residues; that stretch reads PKISSQGQFSMQPTLTSPKMNIHHSSQYN. Serine 466 carries the phosphoserine modification. Low complexity predominate over residues 479 to 508; the sequence is SADQPQQPQPQTQQNVQSAAQQQQSFLRQQ. Polar residues predominate over residues 509 to 551; sequence ATLTPSSRIPSGYSANHYQINSVNPLLRNSQISPPNSQIPINS. Serine 541 carries the post-translational modification Phosphoserine. Positions 552 to 567 are enriched in low complexity; sequence QTLSQAQPPAQSQTQQ. Phosphoserine is present on residues serine 636, serine 638, serine 640, serine 653, and serine 655.

In terms of assembly, interacts with RAD53. In terms of processing, hyperphosphorylated in response to DNA damage by MEC1.

Its subcellular location is the cytoplasm. Involved in normal G2/M phase transition of the mitotic cell cycle. In association with RAD53, also involved in checkpoint control in response to DNA damage. The chain is RNA-binding protein PIN4 (PIN4) from Saccharomyces cerevisiae (strain ATCC 204508 / S288c) (Baker's yeast).